The chain runs to 409 residues: uncharacterized protein (409 aa).

3 disordered regions span residues 12–32, 133–160, and 194–213; these read ENTE…LHCP, EVST…SREQ, and TVSS…GLST. Residues 134 to 160 are compositionally biased toward polar residues; it reads VSTQKSWSSEKNWSGLSQGPGTASREQ.

This is an uncharacterized protein from Mus musculus (Mouse).